We begin with the raw amino-acid sequence, 346 residues long: UPF0421 protein OB2406 (346 aa).

The next 4 membrane-spanning stretches (helical) occupy residues 16 to 36, 55 to 75, 102 to 122, and 128 to 148; these read IAVL…VFAV, LIRF…IALF, LLVA…NYVM, and LFTT…LLPP.

Belongs to the UPF0421 family.

The protein resides in the cell membrane. This Oceanobacillus iheyensis (strain DSM 14371 / CIP 107618 / JCM 11309 / KCTC 3954 / HTE831) protein is UPF0421 protein OB2406.